Here is a 262-residue protein sequence, read N- to C-terminus: Polyamine aminopropyltransferase (262 aa).

Residues 1–249 (MWITQEITPY…DIHRAAFALP (249 aa)) form the PABS domain. Asn-29 is an S-methyl-5'-thioadenosine binding site. Asp-83 is a binding site for spermidine. The Proton acceptor role is filled by Asp-155.

It belongs to the spermidine/spermine synthase family. In terms of assembly, homodimer or homotetramer.

The protein resides in the cytoplasm. The catalysed reaction is S-adenosyl 3-(methylsulfanyl)propylamine + putrescine = S-methyl-5'-thioadenosine + spermidine + H(+). The protein operates within amine and polyamine biosynthesis; spermidine biosynthesis; spermidine from putrescine: step 1/1. In terms of biological role, catalyzes the irreversible transfer of a propylamine group from the amino donor S-adenosylmethioninamine (decarboxy-AdoMet) to putrescine (1,4-diaminobutane) to yield spermidine. The sequence is that of Polyamine aminopropyltransferase from Helicobacter pylori (strain P12).